The chain runs to 222 residues: MKKLLLIATASATILSSSVSFAECIDNEWYLRADAGVAMFNKEQDKATGVKLKSNKAIPIDLGIGYYISENVRADLTLGTTIGGKLKKYGAATNTHFTGTNVSVSHKPTVTRLLINGYVDLTSFDMFDVFVGGGVGPALVKEKISGVSGLASNTKNKTNVSYKLIFGTSAQIADGVKVELAYSWINDGKTKTHNVMYKGASVQTGGMRYQSHNLTVGVRFGI.

The N-terminal stretch at 1-22 (MKKLLLIATASATILSSSVSFA) is a signal peptide.

Its function is as follows. Adheres to biotinylated epithelial (Vero cell) proteins. The protein is Putative adhesin RP828 of Rickettsia prowazekii (strain Madrid E).